Here is a 362-residue protein sequence, read N- to C-terminus: Chorismate synthase (362 aa).

The NADP(+) site is built by Arg48 and Arg54. FMN contacts are provided by residues 125 to 127, 238 to 239, Gly278, 293 to 297, and Arg319; these read RSS, NA, and KPTSS.

It belongs to the chorismate synthase family. In terms of assembly, homotetramer. The cofactor is FMNH2.

It carries out the reaction 5-O-(1-carboxyvinyl)-3-phosphoshikimate = chorismate + phosphate. Its pathway is metabolic intermediate biosynthesis; chorismate biosynthesis; chorismate from D-erythrose 4-phosphate and phosphoenolpyruvate: step 7/7. In terms of biological role, catalyzes the anti-1,4-elimination of the C-3 phosphate and the C-6 proR hydrogen from 5-enolpyruvylshikimate-3-phosphate (EPSP) to yield chorismate, which is the branch point compound that serves as the starting substrate for the three terminal pathways of aromatic amino acid biosynthesis. This reaction introduces a second double bond into the aromatic ring system. The polypeptide is Chorismate synthase (Tolumonas auensis (strain DSM 9187 / NBRC 110442 / TA 4)).